We begin with the raw amino-acid sequence, 334 residues long: Probable fructose-bisphosphate aldolase class 1 (334 aa).

It belongs to the class I fructose-bisphosphate aldolase family.

It carries out the reaction beta-D-fructose 1,6-bisphosphate = D-glyceraldehyde 3-phosphate + dihydroxyacetone phosphate. It participates in carbohydrate degradation; glycolysis; D-glyceraldehyde 3-phosphate and glycerone phosphate from D-glucose: step 4/4. This chain is Probable fructose-bisphosphate aldolase class 1, found in Xylella fastidiosa (strain Temecula1 / ATCC 700964).